We begin with the raw amino-acid sequence, 626 residues long: Probable serine/threonine-protein kinase CCRP1 (626 aa).

The Protein kinase domain maps to 36–291; the sequence is YSKGRMLGKG…LDEILQHPFL (256 aa). Residues 42–50 and K65 each bind ATP; that span reads LGKGGFAKC. Phosphoserine is present on S71. The active-site Proton acceptor is the D159. Residues 399–433 form a disordered region; it reads NFTKTGSWQSNLNGTQSVKGSSRPQTVQQKGDLKS. The segment covering 400–427 has biased composition (polar residues); the sequence is FTKTGSWQSNLNGTQSVKGSSRPQTVQQ. 2 consecutive POLO box domains span residues 471-554 and 574-626; these read WVKK…YLEG and YVKK…PISP.

It belongs to the protein kinase superfamily. Ser/Thr protein kinase family. CDC5/Polo subfamily. Embryo.

The catalysed reaction is L-seryl-[protein] + ATP = O-phospho-L-seryl-[protein] + ADP + H(+). The enzyme catalyses L-threonyl-[protein] + ATP = O-phospho-L-threonyl-[protein] + ADP + H(+). Functionally, may play a role in the division of some cell types. In Zea mays (Maize), this protein is Probable serine/threonine-protein kinase CCRP1 (CCRP1).